Reading from the N-terminus, the 133-residue chain is Small ribosomal subunit protein uS8c (133 aa).

Belongs to the universal ribosomal protein uS8 family. In terms of assembly, part of the 30S ribosomal subunit.

The protein resides in the plastid. Its subcellular location is the chloroplast. One of the primary rRNA binding proteins, it binds directly to 16S rRNA central domain where it helps coordinate assembly of the platform of the 30S subunit. The sequence is that of Small ribosomal subunit protein uS8c (rps8) from Mesostigma viride (Green alga).